Here is a 314-residue protein sequence, read N- to C-terminus: MPSRPPLTVLLASPRGFCAGVDRAIQIVERAIEKYGAPVYVRHEIVHNRHVVERLKALGAVFVEELDQAPDDRPVVFSAHGVPKSVPAAAKSRRMLYLDATCPLVSKVHVEAQRHFDAGREIVLIGHAGHPEVVGTMGQLPEGAVALIETVADAMAFQPRDPANVAFVTQTTLSVDDTAEIVEALRARFPAIAAPHKEDICYATTNRQEAVKAIAAKAQVLVVLGSANSSNSVRLAEVGRRAGARAYLIDDAEGLDFTWLEGVETVGVTAGASAPEVLVQGVLDRLAERFEVTLTEADTARETVTFKLPRALAG.

[4Fe-4S] cluster is bound at residue cysteine 18. (2E)-4-hydroxy-3-methylbut-2-enyl diphosphate-binding residues include histidine 47 and histidine 80. Dimethylallyl diphosphate-binding residues include histidine 47 and histidine 80. 2 residues coordinate isopentenyl diphosphate: histidine 47 and histidine 80. Cysteine 102 provides a ligand contact to [4Fe-4S] cluster. Histidine 130 provides a ligand contact to (2E)-4-hydroxy-3-methylbut-2-enyl diphosphate. Histidine 130 contacts dimethylallyl diphosphate. Histidine 130 contacts isopentenyl diphosphate. Residue glutamate 132 is the Proton donor of the active site. Threonine 171 contributes to the (2E)-4-hydroxy-3-methylbut-2-enyl diphosphate binding site. Cysteine 201 is a binding site for [4Fe-4S] cluster. Positions 229, 230, 231, and 273 each coordinate (2E)-4-hydroxy-3-methylbut-2-enyl diphosphate. Dimethylallyl diphosphate is bound by residues serine 229, serine 230, asparagine 231, and serine 273. 4 residues coordinate isopentenyl diphosphate: serine 229, serine 230, asparagine 231, and serine 273.

This sequence belongs to the IspH family. Requires [4Fe-4S] cluster as cofactor.

The catalysed reaction is isopentenyl diphosphate + 2 oxidized [2Fe-2S]-[ferredoxin] + H2O = (2E)-4-hydroxy-3-methylbut-2-enyl diphosphate + 2 reduced [2Fe-2S]-[ferredoxin] + 2 H(+). It catalyses the reaction dimethylallyl diphosphate + 2 oxidized [2Fe-2S]-[ferredoxin] + H2O = (2E)-4-hydroxy-3-methylbut-2-enyl diphosphate + 2 reduced [2Fe-2S]-[ferredoxin] + 2 H(+). Its pathway is isoprenoid biosynthesis; dimethylallyl diphosphate biosynthesis; dimethylallyl diphosphate from (2E)-4-hydroxy-3-methylbutenyl diphosphate: step 1/1. It participates in isoprenoid biosynthesis; isopentenyl diphosphate biosynthesis via DXP pathway; isopentenyl diphosphate from 1-deoxy-D-xylulose 5-phosphate: step 6/6. Catalyzes the conversion of 1-hydroxy-2-methyl-2-(E)-butenyl 4-diphosphate (HMBPP) into a mixture of isopentenyl diphosphate (IPP) and dimethylallyl diphosphate (DMAPP). Acts in the terminal step of the DOXP/MEP pathway for isoprenoid precursor biosynthesis. The protein is 4-hydroxy-3-methylbut-2-enyl diphosphate reductase of Phenylobacterium zucineum (strain HLK1).